We begin with the raw amino-acid sequence, 347 residues long: uncharacterized protein (347 aa).

This is an uncharacterized protein from Magallana gigas (Pacific oyster).